Here is a 391-residue protein sequence, read N- to C-terminus: Phosphoglycerate kinase (391 aa).

Substrate is bound by residues 21–23 (DLN), R36, 59–62 (HLGR), R114, and R147. Residues K198, E315, and 344 to 347 (GGDT) each bind ATP.

Belongs to the phosphoglycerate kinase family. As to quaternary structure, monomer.

It is found in the cytoplasm. The catalysed reaction is (2R)-3-phosphoglycerate + ATP = (2R)-3-phospho-glyceroyl phosphate + ADP. It functions in the pathway carbohydrate degradation; glycolysis; pyruvate from D-glyceraldehyde 3-phosphate: step 2/5. This Actinobacillus pleuropneumoniae serotype 5b (strain L20) protein is Phosphoglycerate kinase.